The chain runs to 314 residues: Olfactory receptor 9Q2 (314 aa).

Over 1-25 (MAERNYTVVTEFFLTAFTEHLQWRV) the chain is Extracellular. An N-linked (GlcNAc...) asparagine glycan is attached at asparagine 5. A helical membrane pass occupies residues 26–46 (PLFLIFLSFYLATMLGNTGMI). Over 47 to 54 (LLIRGDRR) the chain is Cytoplasmic. A helical membrane pass occupies residues 55–75 (LHTPMYFFLSHLSLVDICYSS). Over 76 to 99 (AIIPQMLAVLWEHGTTISQARCAA) the chain is Extracellular. A disulfide bridge links cysteine 97 with cysteine 189. Residues 100 to 120 (QFFLFTFFASIDCYLLAIMAY) traverse the membrane as a helical segment. Topologically, residues 121–139 (DRYTAVCQPLLYVTIITEK) are cytoplasmic. The helical transmembrane segment at 140-160 (ARWGLVTGAYVAGFFSAFVRT) threads the bilayer. At 161-197 (VTAFTLSFCGNNEINFIFCDLPPLLKLSCGDSYTQEV) the chain is on the extracellular side. Residues 198–217 (VIIVFALFVMPACILVILVS) form a helical membrane-spanning segment. The Cytoplasmic segment spans residues 218–237 (YLFIIVAILQIHSAGGRAKT). The helical transmembrane segment at 238–258 (FSTCASHLTAVALFFGTLIFM) threads the bilayer. Topologically, residues 259-271 (YLRDNTGQSSEGD) are extracellular. A helical transmembrane segment spans residues 272–292 (RVVSVLYTVVTPMLNPLIYSL). Residues 293-314 (RNKEVKEATRKALSKSKPARRP) are Cytoplasmic-facing.

Belongs to the G-protein coupled receptor 1 family.

The protein resides in the cell membrane. Its function is as follows. Odorant receptor. In Homo sapiens (Human), this protein is Olfactory receptor 9Q2 (OR9Q2).